Consider the following 47-residue polypeptide: Protein PsbN (47 aa).

Residues 7 to 29 form a helical membrane-spanning segment; sequence VAISISCLLISFTGYALYTAFGN.

Belongs to the PsbN family.

Its subcellular location is the plastid membrane. In terms of biological role, may play a role in photosystem I and II biogenesis. This Aneura mirabilis (Parasitic liverwort) protein is Protein PsbN.